The chain runs to 195 residues: Small ribosomal subunit protein uS4B (195 aa).

An S4 RNA-binding domain is found at 107–181 (RRLQTQVYKL…VARRNAARKA (75 aa)). Residues 161–195 (TSPFGGARPGRVARRNAARKAEASGEAAEEAEDEE) form a disordered region. Lys-180 participates in a covalent cross-link: Glycyl lysine isopeptide (Lys-Gly) (interchain with G-Cter in ubiquitin). Phosphoserine is present on Ser-184.

This sequence belongs to the universal ribosomal protein uS4 family. Component of the small ribosomal subunit (SSU). Mature yeast ribosomes consist of a small (40S) and a large (60S) subunit. The 40S small subunit contains 1 molecule of ribosomal RNA (18S rRNA) and 33 different proteins (encoded by 57 genes). The large 60S subunit contains 3 rRNA molecules (25S, 5.8S and 5S rRNA) and 46 different proteins (encoded by 81 genes). Interacts with snoRNA U3. uS11 interacts with MPP10. Component of the ribosomal small subunit (SSU) processome composed of at least 40 protein subunits and snoRNA U3.

It localises to the cytoplasm. The protein resides in the nucleus. It is found in the nucleolus. Its function is as follows. Component of the ribosome, a large ribonucleoprotein complex responsible for the synthesis of proteins in the cell. The small ribosomal subunit (SSU) binds messenger RNAs (mRNAs) and translates the encoded message by selecting cognate aminoacyl-transfer RNA (tRNA) molecules. The large subunit (LSU) contains the ribosomal catalytic site termed the peptidyl transferase center (PTC), which catalyzes the formation of peptide bonds, thereby polymerizing the amino acids delivered by tRNAs into a polypeptide chain. The nascent polypeptides leave the ribosome through a tunnel in the LSU and interact with protein factors that function in enzymatic processing, targeting, and the membrane insertion of nascent chains at the exit of the ribosomal tunnel. uS4 is involved in nucleolar processing of pre-18S ribosomal RNA and ribosome assembly. This is Small ribosomal subunit protein uS4B from Saccharomyces cerevisiae (strain ATCC 204508 / S288c) (Baker's yeast).